Here is an 858-residue protein sequence, read N- to C-terminus: Selenocysteine insertion sequence-binding protein 2 (858 aa).

Disordered regions lie at residues Lys127 to Gly261, Ser275 to Glu296, and Leu327 to Thr625. Composition is skewed to basic and acidic residues over residues Lys147–Asp166, Ser188–Lys197, and Pro215–Phe224. Polar residues-rich tracts occupy residues Ala281–Glu296 and Leu327–Tyr352. The Nuclear localization signal motif lies at Lys380–Lys387. Positions Arg418–Ser429 are enriched in basic residues. Positions Lys430–Pro447 are enriched in polar residues. Residues Ile539–Gln548 show a composition bias toward basic and acidic residues. 2 stretches are compositionally biased toward polar residues: residues Ser554–Asp563 and Gly571–Pro582. The interval Leu678–Ile699 is RNA-binding. Positions Met785–Gly819 are disordered. Over residues Pro795–Asp805 the composition is skewed to pro residues.

It localises to the cytoplasm. It is found in the nucleus. Functionally, mRNA-binding protein that binds to the SECIS (selenocysteine insertion sequence) element present in the 3'-UTR of mRNAs encoding selenoproteins and facilitates the incorporation of the rare amino acid selenocysteine. Insertion of selenocysteine at UGA codons is mediated by SECISBP2 and EEFSEC: SECISBP2 (1) specifically binds the SECIS sequence once the 80S ribosome encounters an in-frame UGA codon and (2) contacts the RPS27A/eS31 of the 40S ribosome before ribosome stalling. (3) GTP-bound EEFSEC then delivers selenocysteinyl-tRNA(Sec) to the 80S ribosome and adopts a preaccommodated state conformation. (4) After GTP hydrolysis, EEFSEC dissociates from the assembly, selenocysteinyl-tRNA(Sec) accommodates, and peptide bond synthesis and selenoprotein elongation occur. The protein is Selenocysteine insertion sequence-binding protein 2 of Mus musculus (Mouse).